A 60-amino-acid polypeptide reads, in one-letter code: Large ribosomal subunit protein uL30 (60 aa).

It belongs to the universal ribosomal protein uL30 family. As to quaternary structure, part of the 50S ribosomal subunit.

The protein is Large ribosomal subunit protein uL30 of Flavobacterium johnsoniae (strain ATCC 17061 / DSM 2064 / JCM 8514 / BCRC 14874 / CCUG 350202 / NBRC 14942 / NCIMB 11054 / UW101) (Cytophaga johnsonae).